The sequence spans 379 residues: Chaperone protein DnaJ 2 (379 aa).

The 65-residue stretch at 4–68 folds into the J domain; sequence DYYAVLGVRR…QKKQVYDLGG (65 aa). The CR-type zinc finger occupies 130 to 212; the sequence is GTTKDIQVDT…CAGDGRVPSR (83 aa). Positions 143, 146, 160, 163, 186, 189, 200, and 203 each coordinate Zn(2+). CXXCXGXG motif repeat units follow at residues 143–150, 160–167, 186–193, and 200–207; these read CNTCNGEG, CDMCRGRG, CPQCQGFA, and CPECAGDG. Positions 351-379 are disordered; it reads RGEERPTGQFQPGQQGLFSRLKDAFNGRS. Residues 358 to 367 are compositionally biased toward polar residues; sequence GQFQPGQQGL. The segment covering 370 to 379 has biased composition (basic and acidic residues); it reads RLKDAFNGRS.

Belongs to the DnaJ family. Homodimer. Zn(2+) serves as cofactor.

The protein localises to the cytoplasm. Participates actively in the response to hyperosmotic and heat shock by preventing the aggregation of stress-denatured proteins and by disaggregating proteins, also in an autonomous, DnaK-independent fashion. Unfolded proteins bind initially to DnaJ; upon interaction with the DnaJ-bound protein, DnaK hydrolyzes its bound ATP, resulting in the formation of a stable complex. GrpE releases ADP from DnaK; ATP binding to DnaK triggers the release of the substrate protein, thus completing the reaction cycle. Several rounds of ATP-dependent interactions between DnaJ, DnaK and GrpE are required for fully efficient folding. Also involved, together with DnaK and GrpE, in the DNA replication of plasmids through activation of initiation proteins. This chain is Chaperone protein DnaJ 2, found in Streptomyces albus G.